Reading from the N-terminus, the 262-residue chain is Acyl-[acyl-carrier-protein]--UDP-N-acetylglucosamine O-acyltransferase (262 aa).

It belongs to the transferase hexapeptide repeat family. LpxA subfamily. Homotrimer.

The protein resides in the cytoplasm. The enzyme catalyses a (3R)-hydroxyacyl-[ACP] + UDP-N-acetyl-alpha-D-glucosamine = a UDP-3-O-[(3R)-3-hydroxyacyl]-N-acetyl-alpha-D-glucosamine + holo-[ACP]. It functions in the pathway glycolipid biosynthesis; lipid IV(A) biosynthesis; lipid IV(A) from (3R)-3-hydroxytetradecanoyl-[acyl-carrier-protein] and UDP-N-acetyl-alpha-D-glucosamine: step 1/6. Its function is as follows. Involved in the biosynthesis of lipid A, a phosphorylated glycolipid that anchors the lipopolysaccharide to the outer membrane of the cell. The sequence is that of Acyl-[acyl-carrier-protein]--UDP-N-acetylglucosamine O-acyltransferase from Haemophilus influenzae (strain PittEE).